The chain runs to 799 residues: Protein translocase subunit SecA 1 (799 aa).

ATP is bound by residues Gln-85, 103–107 (GEGKT), and Asp-504.

Belongs to the SecA family. In terms of assembly, monomer and homodimer. Part of the essential Sec protein translocation apparatus which comprises SecA, SecYEG and auxiliary proteins SecDF. Other proteins may also be involved.

It localises to the cell membrane. The protein localises to the cytoplasm. It catalyses the reaction ATP + H2O + cellular proteinSide 1 = ADP + phosphate + cellular proteinSide 2.. Part of the Sec protein translocase complex. Interacts with the SecYEG preprotein conducting channel. Has a central role in coupling the hydrolysis of ATP to the transfer of proteins into and across the cell membrane, serving as an ATP-driven molecular motor driving the stepwise translocation of polypeptide chains across the membrane. The protein is Protein translocase subunit SecA 1 of Lactobacillus johnsonii (strain CNCM I-12250 / La1 / NCC 533).